A 225-amino-acid chain; its full sequence is Urease accessory protein UreE (225 aa).

Composition is skewed to basic and acidic residues over residues 189–202 (HSHD…EHEG) and 212–225 (NSHD…HSRR). Residues 189–225 (HSHDFMGHSHEHEGHRHVHNHAGNSHDNEHDEHHSRR) form a disordered region.

Belongs to the UreE family.

It localises to the cytoplasm. Its function is as follows. Involved in urease metallocenter assembly. Binds nickel. Probably functions as a nickel donor during metallocenter assembly. This Edwardsiella ictaluri protein is Urease accessory protein UreE.